Here is a 104-residue protein sequence, read N- to C-terminus: Protamine-2 (104 aa).

The segment at 1-91 (MVRYRMRSPS…RRGCRRSRRR (91 aa)) is disordered. 3 positions are modified to phosphoserine: S8, S10, and S33. The span at 33–44 (SPERVEDYGRTE) shows a compositional bias: basic and acidic residues. A compositionally biased stretch (basic residues) spans 45 to 91 (RGHHHRHRRCKRLHRIHKRRRSCRRRRRHSCRHRRRHRRGCRRSRRR).

Belongs to the protamine P2 family. In terms of assembly, interacts with TDRP. In terms of processing, proteolytic processing into mature chains is required for histone eviction during spermatogenesis. Transition proteins (TNP1 and TNP2) are required for processing. As to expression, testis.

It is found in the nucleus. It localises to the chromosome. Functionally, protamines substitute for histones in the chromatin of sperm during the haploid phase of spermatogenesis. They compact sperm DNA into a highly condensed, stable and inactive complex. The sequence is that of Protamine-2 (Prm2) from Rattus norvegicus (Rat).